The sequence spans 677 residues: Beta-galactosidase (677 aa).

Positions 1 to 23 (MPGFLVRILPLLLVLLLLGPTRG) are cleaved as a signal peptide. A propeptide spanning residues 24-28 (LRNAT) is cleaved from the precursor. N-linked (GlcNAc...) asparagine glycosylation occurs at Asn-26. The substrate site is built by Tyr-83, Glu-129, and Asn-187. Glu-188 functions as the Proton donor in the catalytic mechanism. A disulfide bridge links Cys-195 with Cys-230. N-linked (GlcNAc...) asparagine glycosylation is present at Asn-247. Catalysis depends on Glu-268, which acts as the Nucleophile. Substrate is bound at residue Tyr-333. Asn-464, Asn-498, Asn-542, Asn-545, and Asn-555 each carry an N-linked (GlcNAc...) asparagine glycan. Cys-626 and Cys-634 are joined by a disulfide. The disordered stretch occupies residues 650 to 677 (YDHPSKPVEKRLMPPPPQKNKDSWLDHV). 2 stretches are compositionally biased toward basic and acidic residues: residues 652-661 (HPSKPVEKRL) and 668-677 (KNKDSWLDHV).

It belongs to the glycosyl hydrolase 35 family. Homodimer. May form higher multimers. In terms of tissue distribution, detected in placenta (at protein level). Detected in fibroblasts and testis.

The protein resides in the lysosome. Its subcellular location is the cytoplasm. It is found in the perinuclear region. The enzyme catalyses Hydrolysis of terminal non-reducing beta-D-galactose residues in beta-D-galactosides.. Cleaves beta-linked terminal galactosyl residues from gangliosides, glycoproteins, and glycosaminoglycans. Its function is as follows. Has no beta-galactosidase catalytic activity, but plays functional roles in the formation of extracellular elastic fibers (elastogenesis) and in the development of connective tissue. Seems to be identical to the elastin-binding protein (EBP), a major component of the non-integrin cell surface receptor expressed on fibroblasts, smooth muscle cells, chondroblasts, leukocytes, and certain cancer cell types. In elastin producing cells, associates with tropoelastin intracellularly and functions as a recycling molecular chaperone which facilitates the secretions of tropoelastin and its assembly into elastic fibers. This is Beta-galactosidase (GLB1) from Homo sapiens (Human).